A 152-amino-acid polypeptide reads, in one-letter code: Ribosome maturation factor RimP (152 aa).

The protein belongs to the RimP family.

It localises to the cytoplasm. Functionally, required for maturation of 30S ribosomal subunits. The sequence is that of Ribosome maturation factor RimP from Burkholderia ambifaria (strain MC40-6).